The chain runs to 448 residues: Noelin-2 (448 aa).

An N-terminal signal peptide occupies residues 1 to 14 (MRKLRQTGTTIAGG). 2 coiled-coil regions span residues 52-79 (RDGR…LELR) and 130-187 (LEQY…AQKL). N-linked (GlcNAc...) asparagine glycosylation is found at N68, N149, N269, N304, N393, and N435. Residues 188-440 (GCGKLTGVSN…QVLYNVTLFH (253 aa)) form the Olfactomedin-like domain. Residues C189 and C371 are joined by a disulfide bond.

In terms of assembly, peripherally associated with AMPAR complex. AMPAR complex consists of an inner core made of 4 pore-forming GluA/GRIA proteins (GRIA1, GRIA2, GRIA3 and GRIA4) and 4 major auxiliary subunits arranged in a twofold symmetry. One of the two pairs of distinct binding sites is occupied either by CNIH2, CNIH3 or CACNG2, CACNG3. The other harbors CACNG2, CACNG3, CACNG4, CACNG8 or GSG1L. This inner core of AMPAR complex is complemented by outer core constituents binding directly to the GluA/GRIA proteins at sites distinct from the interaction sites of the inner core constituents. Outer core constituents include at least PRRT1, PRRT2, CKAMP44/SHISA9, FRRS1L and NRN1. The proteins of the inner and outer core serve as a platform for other, more peripherally associated AMPAR constituents, including OLFM2. Alone or in combination, these auxiliary subunits control the gating and pharmacology of the AMPAR complex and profoundly impact their biogenesis and protein processing. Interacts with GRIA2. Interacts with OLFM1 and OLFM3. Interacts with SRF; the interaction promotes dissociation of SRF from the transcriptional repressor HEY2. Interacts with RUNX2. Expressed in the brain (at protein level). In the developing eye, first detected at 12 dpc in the retinal pigmented epithelium and preferentially expressed in differentiating retinal ganglion cells between 15 and 18 dpc. In the brain, expression is detected mainly in the olfactory bulb, cortex, piriform cortex, olfactory trabeculae, and inferior and superior colliculus. In the adult eye, expression is detected mainly in retinal ganglion cells. Expressed in carotid arteries.

It localises to the secreted. The protein localises to the synapse. Its subcellular location is the membrane. The protein resides in the nucleus. It is found in the cytoplasm. Its function is as follows. Involved in transforming growth factor beta (TGF-beta)-induced smooth muscle differentiation. TGF-beta induces expression and nuclear translocation of OLFM2 where it binds to SRF, causing its dissociation from the transcriptional repressor HEY2/HERP1 and facilitating binding of SRF to target genes. Plays a role in AMPAR complex organization. Is a regulator of vascular smooth-muscle cell (SMC) phenotypic switching, that acts by promoting RUNX2 and inhibiting MYOCD binding to SRF. SMC phenotypic switching is the process through which vascular SMCs undergo transition between a quiescent contractile phenotype and a proliferative synthetic phenotype in response to pathological stimuli. SMC phenotypic plasticity is essential for vascular development and remodeling. The sequence is that of Noelin-2 (Olfm2) from Mus musculus (Mouse).